The chain runs to 191 residues: MTGDVDMSLHPSGIIPELQNVVSTVNLGCTLELKEIAMQARNAEYNPKRFAAVIMRIRDPKTTALIFGSGKMVCTGAKSEQDSRTAARKYAKIVQKLGFPAKFTEFKIQNIVGSCDVKFPIRMEPLAYQHQQFCSYEPELFPGLIYRMLQPKIVLLIFVSGKVVLTGAKERTEIYRAFEQIYPVLTQFRKR.

2 consecutive repeat copies span residues 18-94 (LQNV…AKIV) and 108-185 (IQNI…YPVL).

It belongs to the TBP family. As to quaternary structure, belongs to the TFIID complex together with the TBP-associated factors (TAFs). Binds DNA as monomer.

Its subcellular location is the nucleus. Its function is as follows. General transcription factor that functions at the core of the DNA-binding multiprotein factor TFIID. Binding of TFIID to the TATA box is the initial transcriptional step of the pre-initiation complex (PIC), playing a role in the activation of eukaryotic genes transcribed by RNA polymerase II. This chain is TATA-box-binding protein, found in Acetabularia peniculus (Green alga).